The following is a 507-amino-acid chain: Maturase K (507 aa).

This sequence belongs to the intron maturase 2 family. MatK subfamily.

It localises to the plastid. The protein localises to the chloroplast. In terms of biological role, usually encoded in the trnK tRNA gene intron. Probably assists in splicing its own and other chloroplast group II introns. The sequence is that of Maturase K from Lyonia ferruginea (Rusty staggerbush).